We begin with the raw amino-acid sequence, 291 residues long: Popeye domain-containing protein 3 (291 aa).

Asn-4 carries an N-linked (GlcNAc...) asparagine glycan. A run of 3 helical transmembrane segments spans residues 27-44 (GAIY…FMGG), 48-70 (FGLL…WAWV), and 77-99 (IFSW…AYQV).

This sequence belongs to the popeye family. In terms of tissue distribution, expressed predominantly in skeletal muscle (at protein level). Also detected in heart.

The protein resides in the membrane. Functionally, may play a role in the maintenance of heart function mediated, at least in part, through cAMP-binding. May play a role in the regulation of KCNK2/TREK-1-mediated current amplitude. This chain is Popeye domain-containing protein 3 (POPDC3), found in Homo sapiens (Human).